Consider the following 256-residue polypeptide: MFYDFVPQSRFLLGTAGYPSPQILQQAAEASKSEIITVSLRREGGQGGAFRELLTQLNKRILPNTAGCHTVKEAVTTAHMARELFNTRWIKLEVIGHADTLQPDPFALVEAARILCADGFQVFPYTTEDLILGEKLLEAGCELLMPWGAPIGSGQGLRNIEGLRSMRSWFKDIPLIIDAGIGSPSQAALAMEMGFDAILLNTAVAKAQDPRRMAQAFAAAIRAGYDARGAGLIERRDMATASTPIFGMAQFSSQEW.

Lys91 (schiff-base intermediate with DXP) is an active-site residue. 1-deoxy-D-xylulose 5-phosphate-binding positions include Gly152, 179–180 (AG), and 201–202 (NT).

Belongs to the ThiG family. As to quaternary structure, homotetramer. Forms heterodimers with either ThiH or ThiS.

It is found in the cytoplasm. It catalyses the reaction [ThiS sulfur-carrier protein]-C-terminal-Gly-aminoethanethioate + 2-iminoacetate + 1-deoxy-D-xylulose 5-phosphate = [ThiS sulfur-carrier protein]-C-terminal Gly-Gly + 2-[(2R,5Z)-2-carboxy-4-methylthiazol-5(2H)-ylidene]ethyl phosphate + 2 H2O + H(+). It functions in the pathway cofactor biosynthesis; thiamine diphosphate biosynthesis. In terms of biological role, catalyzes the rearrangement of 1-deoxy-D-xylulose 5-phosphate (DXP) to produce the thiazole phosphate moiety of thiamine. Sulfur is provided by the thiocarboxylate moiety of the carrier protein ThiS. In vitro, sulfur can be provided by H(2)S. This is Thiazole synthase from Erwinia tasmaniensis (strain DSM 17950 / CFBP 7177 / CIP 109463 / NCPPB 4357 / Et1/99).